The primary structure comprises 368 residues: Alanine racemase (368 aa).

Lys-40 (proton acceptor; specific for D-alanine) is an active-site residue. Lys-40 carries the N6-(pyridoxal phosphate)lysine modification. Substrate is bound at residue Arg-134. Tyr-263 serves as the catalytic Proton acceptor; specific for L-alanine. Position 310 (Met-310) interacts with substrate.

It belongs to the alanine racemase family. It depends on pyridoxal 5'-phosphate as a cofactor.

The enzyme catalyses L-alanine = D-alanine. It participates in amino-acid biosynthesis; D-alanine biosynthesis; D-alanine from L-alanine: step 1/1. Its function is as follows. Catalyzes the interconversion of L-alanine and D-alanine. May also act on other amino acids. This is Alanine racemase (alr) from Listeria monocytogenes serotype 4b (strain F2365).